Reading from the N-terminus, the 137-residue chain is Putative pre-16S rRNA nuclease (137 aa).

Belongs to the YqgF nuclease family.

It localises to the cytoplasm. Its function is as follows. Could be a nuclease involved in processing of the 5'-end of pre-16S rRNA. The protein is Putative pre-16S rRNA nuclease of Anaeromyxobacter dehalogenans (strain 2CP-C).